We begin with the raw amino-acid sequence, 107 residues long: Nucleoid-associated protein RC1337 (107 aa).

It belongs to the YbaB/EbfC family. As to quaternary structure, homodimer.

It localises to the cytoplasm. The protein resides in the nucleoid. In terms of biological role, binds to DNA and alters its conformation. May be involved in regulation of gene expression, nucleoid organization and DNA protection. The polypeptide is Nucleoid-associated protein RC1337 (Rickettsia conorii (strain ATCC VR-613 / Malish 7)).